Reading from the N-terminus, the 156-residue chain is Small ribosomal subunit protein uS7 (156 aa).

The protein belongs to the universal ribosomal protein uS7 family. Part of the 30S ribosomal subunit. Contacts proteins S9 and S11.

In terms of biological role, one of the primary rRNA binding proteins, it binds directly to 16S rRNA where it nucleates assembly of the head domain of the 30S subunit. Is located at the subunit interface close to the decoding center, probably blocks exit of the E-site tRNA. In Staphylococcus carnosus (strain TM300), this protein is Small ribosomal subunit protein uS7.